Here is a 159-residue protein sequence, read N- to C-terminus: Large ribosomal subunit protein uL22c (159 aa).

It belongs to the universal ribosomal protein uL22 family. Part of the 50S ribosomal subunit.

Its subcellular location is the plastid. The protein resides in the chloroplast. Functionally, this protein binds specifically to 23S rRNA. In terms of biological role, the globular domain of the protein is located near the polypeptide exit tunnel on the outside of the subunit, while an extended beta-hairpin is found that lines the wall of the exit tunnel in the center of the 70S ribosome. This Ipomoea purpurea (Common morning glory) protein is Large ribosomal subunit protein uL22c (rpl22).